The following is a 364-amino-acid chain: MKVLIAGGGTGGHINPGLAIAKYIKQKEAEADITFVGTKKGLETKLVPREGYPLETITVRGFKRKLSLDTLIAIKELIQSFFQASRLLKRIKPDVVIGTGGYVCGPVLYMAAKKGIPTLIHESNAFPGVTNRLLERYVSYVAISFKDAEKYFKNKKKLVLTGNPVREELLNSGRDKVASNLGIVEGKPLIVAMGGSRGARRINETIADMLNNYFKGEFNLIFATGEAQFDDISSTVKIDEKYRDMVKVVPYIYNVDQVYVASDLMICRAGAITISELQVMGIPSILIPSPYVTANHQEHNARSLERDGGAVVILENELNADLLYKQICSLIFNKDVLKKMSKNTSKNRVTDSAEKIYHLIKEII.

Residues 10–12 (TGG), Asn124, Arg166, Ser196, Ile252, and Gln297 each bind UDP-N-acetyl-alpha-D-glucosamine.

The protein belongs to the glycosyltransferase 28 family. MurG subfamily.

It is found in the cell membrane. The catalysed reaction is di-trans,octa-cis-undecaprenyl diphospho-N-acetyl-alpha-D-muramoyl-L-alanyl-D-glutamyl-meso-2,6-diaminopimeloyl-D-alanyl-D-alanine + UDP-N-acetyl-alpha-D-glucosamine = di-trans,octa-cis-undecaprenyl diphospho-[N-acetyl-alpha-D-glucosaminyl-(1-&gt;4)]-N-acetyl-alpha-D-muramoyl-L-alanyl-D-glutamyl-meso-2,6-diaminopimeloyl-D-alanyl-D-alanine + UDP + H(+). It participates in cell wall biogenesis; peptidoglycan biosynthesis. In terms of biological role, cell wall formation. Catalyzes the transfer of a GlcNAc subunit on undecaprenyl-pyrophosphoryl-MurNAc-pentapeptide (lipid intermediate I) to form undecaprenyl-pyrophosphoryl-MurNAc-(pentapeptide)GlcNAc (lipid intermediate II). This is UDP-N-acetylglucosamine--N-acetylmuramyl-(pentapeptide) pyrophosphoryl-undecaprenol N-acetylglucosamine transferase from Ruminiclostridium cellulolyticum (strain ATCC 35319 / DSM 5812 / JCM 6584 / H10) (Clostridium cellulolyticum).